The chain runs to 888 residues: Mitogen-activated protein kinase kinase kinase 12 (888 aa).

Positions 26–42 are enriched in basic and acidic residues; the sequence is MRKLDPDTSDCTPEKDL. Residues 26–104 form a disordered region; that stretch reads MRKLDPDTSD…TGSPESRASR (79 aa). Phosphothreonine occurs at positions 37 and 43. Over residues 64–75 the composition is skewed to pro residues; that stretch reads SPSPGGEPPPEP. Residues 158 to 399 enclose the Protein kinase domain; it reads ILDLQWVGSG…FRQILLHLDI (242 aa). ATP-binding positions include 164-172 and Lys-185; that span reads VGSGAQGAV. Catalysis depends on Asp-269, which acts as the Proton acceptor. Leucine-zipper regions lie at residues 423 to 444 and 476 to 497; these read VKLH…EEEL and LNAL…EQAL. The interval 557–620 is disordered; that stretch reads GVGLPGCPKA…GGLGVGPTAW (64 aa). Residues 572-584 show a composition bias toward basic residues; it reads RSRRGKTRHRKAS. Positions 605 to 615 are enriched in gly residues; that stretch reads GGLGSPGGLGV. Phosphoserine is present on Ser-640. Disordered stretches follow at residues 654–731 and 743–888; these read RGRG…YQHL and TRSQ…SLPP. Over residues 704–725 the composition is skewed to gly residues; it reads PGEGVGLLGTGREGTTGRGGSR. Residues 752-763 show a composition bias toward acidic residues; that stretch reads SEEEEGEVDSEV. Composition is skewed to polar residues over residues 776-789 and 798-812; these read NMRQ…SENP and SEPS…GSTN. Residues 813–823 show a composition bias toward basic and acidic residues; sequence TDERPDERSDD.

It belongs to the protein kinase superfamily. STE Ser/Thr protein kinase family. MAP kinase kinase kinase subfamily. Homodimer. Interacts with MBIP. Requires Mg(2+) as cofactor. Post-translationally, autophosphorylated on Ser/Thr. Phosphorylated in cytosol under basal conditions and dephosphorylated when membrane-associated. In terms of processing, the activity of MAP3K12 can be regulated through its proteasomal degradation. APOE, through a receptor-mediated mechanism, activates MAP3K12 by preventing its proteasomal degradation.

The protein localises to the cytoplasm. It is found in the cell membrane. The catalysed reaction is L-seryl-[protein] + ATP = O-phospho-L-seryl-[protein] + ADP + H(+). The enzyme catalyses L-threonyl-[protein] + ATP = O-phospho-L-threonyl-[protein] + ADP + H(+). In terms of biological role, part of a non-canonical MAPK signaling pathway. Activated by APOE, enhances the AP-1-mediated transcription of APP, via a MAP kinase signal transduction pathway composed of MAP2K7 and MAPK1/ERK2 and MAPK3/ERK1. May be an activator of the JNK/SAPK pathway. In Rattus norvegicus (Rat), this protein is Mitogen-activated protein kinase kinase kinase 12 (Map3k12).